The chain runs to 238 residues: Partner of Y14 and mago (238 aa).

Residues 1–183 are disordered; it reads MTTYATDSQG…GADGHSDLSK (183 aa). 2 stretches are compositionally biased toward basic and acidic residues: residues 65 to 77 and 123 to 133; these read QKAREKREKEQRK and LEQKQKEEQKA. A compositionally biased stretch (low complexity) spans 136-155; that stretch reads RQQAQDQRNSKQQQSQNQSK. The stretch at 176 to 233 forms a coiled coil; sequence DGHSDLSKKLRKLRKKIREIEVIEERLRASDGPRPDKDQIEKAKRKAEILKEIEELER.

The protein belongs to the pym family. In terms of assembly, interacts (via N-terminus) with mago and tsu/Y14; the interaction is direct.

Its subcellular location is the cytoplasm. The protein localises to the nucleus. In terms of biological role, regulator of the exon junction complex (EJC), a multiprotein complex that associates immediately upstream of the exon-exon junction on mRNAs and serves as a positional landmarks for the intron exon structure of genes and directs post-transcriptional processes in the cytoplasm such as mRNA export, nonsense-mediated mRNA decay (NMD) or translation. This Culex quinquefasciatus (Southern house mosquito) protein is Partner of Y14 and mago.